The primary structure comprises 147 residues: Ubiquitin-conjugating enzyme E2 D3 (147 aa).

The region spanning 1–147 is the UBC core domain; that stretch reads MALKRINKEL…SREWTQKYAM (147 aa). The cysteines at positions 21 and 107 are disulfide-linked. Cys85 functions as the Glycyl thioester intermediate in the catalytic mechanism.

This sequence belongs to the ubiquitin-conjugating enzyme family. As to quaternary structure, interacts with SCF (SKP1-CUL1-F-box protein) E3 ubiquitin ligase complex; when Cullin is neddylated, the interaction between the E2 and the SCF complex is strengthened. Interacts with DAPK3. Interacts with BRCA1; the DNA damage checkpoint promotes the association with BRCA1 after ionizing radiation. Interacts non-covalently with ubiquitin. Interacts with E3 ubiquitin-protein ligase CBLC. Interacts with UBTD1. Interacts with RIGI and RNF135; involved in RIGI ubiquitination and activation. In terms of processing, phosphorylated by AURKB.

It localises to the cell membrane. It is found in the endosome membrane. It catalyses the reaction S-ubiquitinyl-[E1 ubiquitin-activating enzyme]-L-cysteine + [E2 ubiquitin-conjugating enzyme]-L-cysteine = [E1 ubiquitin-activating enzyme]-L-cysteine + S-ubiquitinyl-[E2 ubiquitin-conjugating enzyme]-L-cysteine.. It carries out the reaction S-ubiquitinyl-[E1 ubiquitin-activating enzyme]-L-cysteine + [acceptor protein]-L-lysine = [E1 ubiquitin-activating enzyme]-L-cysteine + N(6)-monoubiquitinyl-[acceptor protein]-L-lysine.. Its pathway is protein modification; protein ubiquitination. Functionally, accepts ubiquitin from the E1 complex and catalyzes its covalent attachment to other proteins. In vitro catalyzes 'Lys-11'-, as well as 'Lys-48'-linked polyubiquitination. Cooperates with the E2 CDC34 and the SCF(FBXW11) E3 ligase complex for the polyubiquitination of NFKBIA leading to its subsequent proteasomal degradation. Acts as an initiator E2, priming the phosphorylated NFKBIA target at positions 'Lys-21' and/or 'Lys-22' with a monoubiquitin. Ubiquitin chain elongation is then performed by CDC34, building ubiquitin chains from the UBE2D3-primed NFKBIA-linked ubiquitin. Also acts as an initiator E2, in conjunction with RNF8, for the priming of PCNA. Monoubiquitination of PCNA, and its subsequent polyubiquitination, are essential events in the operation of the DNA damage tolerance (DDT) pathway that is activated after DNA damage caused by UV or chemical agents during S-phase. Associates with the BRCA1/BARD1 E3 ligase complex to perform ubiquitination at DNA damage sites following ionizing radiation leading to DNA repair. Targets DAPK3 for ubiquitination which influences promyelocytic leukemia protein nuclear body (PML-NB) formation in the nucleus. In conjunction with the MDM2 and TOPORS E3 ligases, functions ubiquitination of p53/TP53. In conjunction with the CBL E3 ligase, targets EGFR for polyubiquitination at the plasma membrane as well as during its internalization and transport on endosomes. In conjunction with the STUB1 E3 quality control E3 ligase, ubiquitinates unfolded proteins to catalyze their immediate destruction. Together with RNF135, catalyzes the viral RNA-dependent 'Lys-63'-linked polyubiquitination of RIGI to activate the downstream signaling pathway that leads to interferon beta production. Together with ZNF598, catalyzes ubiquitination of 40S ribosomal proteins in response to ribosome collisions. In cooperation with the GATOR2 complex, catalyzes 'Lys-6'-linked ubiquitination of NPRL2. The polypeptide is Ubiquitin-conjugating enzyme E2 D3 (UBE2D3) (Homo sapiens (Human)).